Reading from the N-terminus, the 112-residue chain is Large ribosomal subunit protein uL22 (112 aa).

It belongs to the universal ribosomal protein uL22 family. Part of the 50S ribosomal subunit.

In terms of biological role, this protein binds specifically to 23S rRNA; its binding is stimulated by other ribosomal proteins, e.g. L4, L17, and L20. It is important during the early stages of 50S assembly. It makes multiple contacts with different domains of the 23S rRNA in the assembled 50S subunit and ribosome. Functionally, the globular domain of the protein is located near the polypeptide exit tunnel on the outside of the subunit, while an extended beta-hairpin is found that lines the wall of the exit tunnel in the center of the 70S ribosome. The sequence is that of Large ribosomal subunit protein uL22 from Nitratidesulfovibrio vulgaris (strain ATCC 29579 / DSM 644 / CCUG 34227 / NCIMB 8303 / VKM B-1760 / Hildenborough) (Desulfovibrio vulgaris).